A 374-amino-acid polypeptide reads, in one-letter code: Alcohol dehydrogenase class-3 (374 aa).

Ala-2 carries the N-acetylalanine modification. Zn(2+) contacts are provided by Cys-45, His-67, Cys-97, Cys-100, Cys-103, Cys-111, and Cys-174. An N6-succinyllysine modification is found at Lys-233. At Ser-247 the chain carries Phosphoserine. Position 315 is an N6-succinyllysine (Lys-315). Ser-324 and Ser-351 each carry phosphoserine.

This sequence belongs to the zinc-containing alcohol dehydrogenase family. Class-III subfamily. As to quaternary structure, homodimer. Zn(2+) is required as a cofactor. As to expression, ubiquitous.

The protein resides in the cytoplasm. It catalyses the reaction a primary alcohol + NAD(+) = an aldehyde + NADH + H(+). The enzyme catalyses a secondary alcohol + NAD(+) = a ketone + NADH + H(+). The catalysed reaction is S-(hydroxymethyl)glutathione + NADP(+) = S-formylglutathione + NADPH + H(+). It carries out the reaction S-(hydroxymethyl)glutathione + NAD(+) = S-formylglutathione + NADH + H(+). It catalyses the reaction 20-oxo-(5Z,8Z,11Z,14Z)-eicosatetraenoate + NAD(+) + H2O = (5Z,8Z,11Z,14Z)-eicosatetraenedioate + NADH + 2 H(+). The enzyme catalyses 20-hydroxy-(5Z,8Z,11Z,14Z)-eicosatetraenoate + NAD(+) = 20-oxo-(5Z,8Z,11Z,14Z)-eicosatetraenoate + NADH + H(+). The catalysed reaction is S-nitrosoglutathione + NADH + H(+) = S-(hydroxysulfenamide)glutathione + NAD(+). In terms of biological role, catalyzes the oxidation of long-chain primary alcohols and the oxidation of S-(hydroxymethyl) glutathione. Also oxidizes long chain omega-hydroxy fatty acids, such as 20-HETE, producing both the intermediate aldehyde, 20-oxoarachidonate and the end product, a dicarboxylic acid, (5Z,8Z,11Z,14Z)-eicosatetraenedioate. Class-III ADH is remarkably ineffective in oxidizing ethanol. Required for clearance of cellular formaldehyde, a cytotoxic and carcinogenic metabolite that induces DNA damage. Also acts as a S-nitroso-glutathione reductase by catalyzing the NADH-dependent reduction of S-nitrosoglutathione, thereby regulating protein S-nitrosylation. The protein is Alcohol dehydrogenase class-3 of Mus musculus (Mouse).